The chain runs to 84 residues: U4-theraphotoxin-Hhn1b (84 aa).

A signal peptide spans 1-22 (MKVTLIAILTCAAVLVLHTTAA). Residues 23–47 (EELEESQLMEVGMPDTELAAVDEER) constitute a propeptide that is removed on maturation. 3 disulfide bridges follow: C51–C65, C55–C76, and C70–C81.

Belongs to the neurotoxin 12 (Hwtx-2) family. 02 (Hwtx-2) subfamily. In terms of tissue distribution, expressed by the venom gland.

The protein resides in the secreted. In terms of biological role, postsynaptic neurotoxin. This Cyriopagopus hainanus (Chinese bird spider) protein is U4-theraphotoxin-Hhn1b.